A 115-amino-acid chain; its full sequence is uncharacterized protein (115 aa).

The region spanning 1 to 115 (MGVEISLDPP…ETVIKLSAAE (115 aa)) is the MSP domain.

This is an uncharacterized protein from Caenorhabditis elegans.